The chain runs to 162 residues: Scytalone dehydratase-like protein claB (162 aa).

Position 48 (Y48) interacts with substrate. Catalysis depends on residues H83 and H108.

It belongs to the scytalone dehydratase family.

It participates in pigment biosynthesis. In terms of biological role, scytalone dehydratase-like protein; part of the gene cluster that mediates the biosynthesis of the bianthraquinone cladofulvin, a conidial pigment not required for virulence but that plays a role in fitness and resistance to environmental stresses including UV light and low-temperature stress. The pathway begins with the synthesis of atrochrysone thioester by the polyketide synthase (PKS) claG. The atrochrysone carboxyl ACP thioesterase claF then breaks the thioester bond and releases the atrochrysone carboxylic acid from claG. This compound is decarboxylated by claH to yield emodin, which is further converted to chrysophanol hydroquinone by the reductase claC and the dehydratase claB. The cytochrome P450 monooxygenase claM then catalyzes the dimerization of nataloe-emodin to cladofulvin. The polypeptide is Scytalone dehydratase-like protein claB (Passalora fulva (Tomato leaf mold)).